The following is a 542-amino-acid chain: Protein MGF 505-10R (542 aa).

Belongs to the asfivirus MGF 505 family.

Its function is as follows. Plays a role in virus cell tropism, and may be required for efficient virus replication in macrophages. In Ornithodoros (relapsing fever ticks), this protein is Protein MGF 505-10R.